The sequence spans 138 residues: Large ribosomal subunit protein bL17 (138 aa).

This sequence belongs to the bacterial ribosomal protein bL17 family. As to quaternary structure, part of the 50S ribosomal subunit. Contacts protein L32.

The sequence is that of Large ribosomal subunit protein bL17 from Halorhodospira halophila (strain DSM 244 / SL1) (Ectothiorhodospira halophila (strain DSM 244 / SL1)).